A 146-amino-acid chain; its full sequence is Hemoglobin subunit beta-2 (146 aa).

N-acetylvaline is present on Val-1. The region spanning 2 to 146 (HLHGDEKAAV…VASALAHKYH (145 aa)) is the Globin domain. Residue Lys-17 is modified to N6-succinyllysine. Ser-44 bears the Phosphoserine mark. Lys-59 is subject to N6-succinyllysine. The heme b site is built by His-63 and His-92. Arg-104 carries the asymmetric dimethylarginine modification. Position 123 is a phosphothreonine (Thr-123).

The protein belongs to the globin family. As to quaternary structure, heterotetramer of two alpha chains and two beta chains. As to expression, red blood cells.

Functionally, involved in oxygen transport from the lung to the various peripheral tissues. This Tapirus terrestris (Lowland tapir) protein is Hemoglobin subunit beta-2 (HBB2).